We begin with the raw amino-acid sequence, 107 residues long: Small ribosomal subunit protein uS10 (107 aa).

This sequence belongs to the universal ribosomal protein uS10 family. As to quaternary structure, part of the 30S ribosomal subunit.

Its function is as follows. Involved in the binding of tRNA to the ribosomes. The sequence is that of Small ribosomal subunit protein uS10 from Deinococcus deserti (strain DSM 17065 / CIP 109153 / LMG 22923 / VCD115).